We begin with the raw amino-acid sequence, 452 residues long: Serine--tRNA ligase (452 aa).

T251–E253 is a binding site for L-serine. ATP is bound at residue R282–E284. E305 serves as a coordination point for L-serine. E369 to S372 provides a ligand contact to ATP. S404 contributes to the L-serine binding site.

It belongs to the class-II aminoacyl-tRNA synthetase family. Type-1 seryl-tRNA synthetase subfamily. In terms of assembly, homodimer. The tRNA molecule binds across the dimer.

The protein resides in the cytoplasm. It catalyses the reaction tRNA(Ser) + L-serine + ATP = L-seryl-tRNA(Ser) + AMP + diphosphate + H(+). It carries out the reaction tRNA(Sec) + L-serine + ATP = L-seryl-tRNA(Sec) + AMP + diphosphate + H(+). It functions in the pathway aminoacyl-tRNA biosynthesis; selenocysteinyl-tRNA(Sec) biosynthesis; L-seryl-tRNA(Sec) from L-serine and tRNA(Sec): step 1/1. Catalyzes the attachment of serine to tRNA(Ser). Is also able to aminoacylate tRNA(Sec) with serine, to form the misacylated tRNA L-seryl-tRNA(Sec), which will be further converted into selenocysteinyl-tRNA(Sec). This is Serine--tRNA ligase from Albidiferax ferrireducens (strain ATCC BAA-621 / DSM 15236 / T118) (Rhodoferax ferrireducens).